Consider the following 255-residue polypeptide: 3-deoxy-manno-octulosonate cytidylyltransferase (255 aa).

The protein belongs to the KdsB family.

Its subcellular location is the cytoplasm. It carries out the reaction 3-deoxy-alpha-D-manno-oct-2-ulosonate + CTP = CMP-3-deoxy-beta-D-manno-octulosonate + diphosphate. Its pathway is nucleotide-sugar biosynthesis; CMP-3-deoxy-D-manno-octulosonate biosynthesis; CMP-3-deoxy-D-manno-octulosonate from 3-deoxy-D-manno-octulosonate and CTP: step 1/1. It participates in bacterial outer membrane biogenesis; lipopolysaccharide biosynthesis. Its function is as follows. Activates KDO (a required 8-carbon sugar) for incorporation into bacterial lipopolysaccharide in Gram-negative bacteria. The polypeptide is 3-deoxy-manno-octulosonate cytidylyltransferase (Xanthobacter autotrophicus (strain ATCC BAA-1158 / Py2)).